The following is an 80-amino-acid chain: Toxin Acra I-3 (80 aa).

The first 22 residues, 1 to 22 (MMKLVLLSVIVILFSLIGSIHG), serve as a signal peptide directing secretion. The region spanning 25–80 (VPGNYPLDSSGNKYPCTVLGDNQSCIDVCKKHGVKYGYCYGFKCWCEYLKDKNVSL) is the LCN-type CS-alpha/beta domain. 3 cysteine pairs are disulfide-bonded: Cys-40/Cys-63, Cys-49/Cys-68, and Cys-53/Cys-70.

Belongs to the long (3 C-C) scorpion toxin superfamily. Sodium/Potassium channel inhibitor family. As to expression, expressed by the venom gland.

It localises to the secreted. Its function is as follows. Probable neurotoxin that inhibits ion channels. Is toxic to mice. The chain is Toxin Acra I-3 from Androctonus crassicauda (Arabian fat-tailed scorpion).